A 420-amino-acid chain; its full sequence is Serine--tRNA ligase (420 aa).

Position 229–231 (229–231 (TAE)) interacts with L-serine. An ATP-binding site is contributed by 260–262 (RAE). Glu-283 lines the L-serine pocket. An ATP-binding site is contributed by 347-350 (EISS). Ser-382 contacts L-serine.

Belongs to the class-II aminoacyl-tRNA synthetase family. Type-1 seryl-tRNA synthetase subfamily. Homodimer. The tRNA molecule binds across the dimer.

The protein resides in the cytoplasm. The enzyme catalyses tRNA(Ser) + L-serine + ATP = L-seryl-tRNA(Ser) + AMP + diphosphate + H(+). It catalyses the reaction tRNA(Sec) + L-serine + ATP = L-seryl-tRNA(Sec) + AMP + diphosphate + H(+). It functions in the pathway aminoacyl-tRNA biosynthesis; selenocysteinyl-tRNA(Sec) biosynthesis; L-seryl-tRNA(Sec) from L-serine and tRNA(Sec): step 1/1. Functionally, catalyzes the attachment of serine to tRNA(Ser). Is also able to aminoacylate tRNA(Sec) with serine, to form the misacylated tRNA L-seryl-tRNA(Sec), which will be further converted into selenocysteinyl-tRNA(Sec). This chain is Serine--tRNA ligase, found in Caldicellulosiruptor saccharolyticus (strain ATCC 43494 / DSM 8903 / Tp8T 6331).